A 383-amino-acid chain; its full sequence is Putative F-box protein At4g09190 (383 aa).

One can recognise an F-box domain in the interval 16 to 67 (RSQREHIPLDLIVEIVSSLPAKSIVRFRSVSKLWSSIITTPDFTSSVVTRSL).

This chain is Putative F-box protein At4g09190, found in Arabidopsis thaliana (Mouse-ear cress).